Consider the following 134-residue polypeptide: NADH-quinone oxidoreductase subunit A 1 (134 aa).

Helical transmembrane passes span 10–30, 65–85, and 94–114; these read LIPLAIYTLFAVGLIGILLLA, FYLIAIFFIVFDVEGAFILAW, and IPGLVHITLFITVLLLGLVWL.

This sequence belongs to the complex I subunit 3 family. In terms of assembly, NDH-1 is composed of 14 different subunits. Subunits NuoA, H, J, K, L, M, N constitute the membrane sector of the complex.

It is found in the cell inner membrane. It carries out the reaction a quinone + NADH + 5 H(+)(in) = a quinol + NAD(+) + 4 H(+)(out). In terms of biological role, NDH-1 shuttles electrons from NADH, via FMN and iron-sulfur (Fe-S) centers, to quinones in the respiratory chain. The immediate electron acceptor for the enzyme in this species is believed to be ubiquinone. Couples the redox reaction to proton translocation (for every two electrons transferred, four hydrogen ions are translocated across the cytoplasmic membrane), and thus conserves the redox energy in a proton gradient. This is NADH-quinone oxidoreductase subunit A 1 from Citrifermentans bemidjiense (strain ATCC BAA-1014 / DSM 16622 / JCM 12645 / Bem) (Geobacter bemidjiensis).